The chain runs to 251 residues: Small ribosomal subunit protein uS2 (251 aa).

Belongs to the universal ribosomal protein uS2 family.

The polypeptide is Small ribosomal subunit protein uS2 (Cereibacter sphaeroides (strain ATCC 17029 / ATH 2.4.9) (Rhodobacter sphaeroides)).